The sequence spans 240 residues: Spore coat polysaccharide biosynthesis protein SpsF (240 aa).

This sequence belongs to the CMP-NeuNAc synthase family.

Its pathway is spore coat biogenesis; spore coat polysaccharide biosynthesis. This chain is Spore coat polysaccharide biosynthesis protein SpsF (spsF), found in Bacillus subtilis (strain 168).